The chain runs to 121 residues: Large ribosomal subunit protein uL18 (121 aa).

This sequence belongs to the universal ribosomal protein uL18 family. As to quaternary structure, part of the 50S ribosomal subunit; part of the 5S rRNA/L5/L18/L25 subcomplex. Contacts the 5S and 23S rRNAs.

In terms of biological role, this is one of the proteins that bind and probably mediate the attachment of the 5S RNA into the large ribosomal subunit, where it forms part of the central protuberance. The protein is Large ribosomal subunit protein uL18 of Methylibium petroleiphilum (strain ATCC BAA-1232 / LMG 22953 / PM1).